Reading from the N-terminus, the 459-residue chain is Argininosuccinate lyase (459 aa).

The protein belongs to the lyase 1 family. Argininosuccinate lyase subfamily.

The protein localises to the cytoplasm. The enzyme catalyses 2-(N(omega)-L-arginino)succinate = fumarate + L-arginine. Its pathway is amino-acid biosynthesis; L-arginine biosynthesis; L-arginine from L-ornithine and carbamoyl phosphate: step 3/3. This chain is Argininosuccinate lyase, found in Lactococcus lactis subsp. cremoris (strain MG1363).